Here is a 481-residue protein sequence, read N- to C-terminus: Cysteine--tRNA ligase (481 aa).

A Zn(2+)-binding site is contributed by Cys27. Residues 29 to 39 (PTVYNYAHIGN) carry the 'HIGH' region motif. Residues Cys222, His247, and Glu251 each coordinate Zn(2+). The 'KMSKS' region motif lies at 279 to 283 (KMSKS). Lys282 is a binding site for ATP.

Belongs to the class-I aminoacyl-tRNA synthetase family. Monomer. Requires Zn(2+) as cofactor.

The protein localises to the cytoplasm. The enzyme catalyses tRNA(Cys) + L-cysteine + ATP = L-cysteinyl-tRNA(Cys) + AMP + diphosphate. The polypeptide is Cysteine--tRNA ligase (Borrelia hermsii (strain HS1 / DAH)).